The following is a 189-amino-acid chain: GTP cyclohydrolase 1 (189 aa).

3 residues coordinate Zn(2+): Cys78, His81, and Cys150.

Belongs to the GTP cyclohydrolase I family. As to quaternary structure, toroid-shaped homodecamer, composed of two pentamers of five dimers.

The catalysed reaction is GTP + H2O = 7,8-dihydroneopterin 3'-triphosphate + formate + H(+). It participates in cofactor biosynthesis; 7,8-dihydroneopterin triphosphate biosynthesis; 7,8-dihydroneopterin triphosphate from GTP: step 1/1. This is GTP cyclohydrolase 1 from Listeria innocua serovar 6a (strain ATCC BAA-680 / CLIP 11262).